Consider the following 335-residue polypeptide: Glyceraldehyde-3-phosphate dehydrogenase (335 aa).

NAD(+) is bound by residues 15 to 16 and D37; that span reads RI. D-glyceraldehyde 3-phosphate is bound by residues 155–157, T186, R201, 214–215, and R237; these read SCT and TG. The Nucleophile role is filled by C156. Residues Q301 and N318 each contribute to the NAD(+) site.

This sequence belongs to the glyceraldehyde-3-phosphate dehydrogenase family. Homotetramer.

It localises to the cytoplasm. The enzyme catalyses D-glyceraldehyde 3-phosphate + phosphate + NADP(+) = (2R)-3-phospho-glyceroyl phosphate + NADPH + H(+). The catalysed reaction is D-glyceraldehyde 3-phosphate + phosphate + NAD(+) = (2R)-3-phospho-glyceroyl phosphate + NADH + H(+). It functions in the pathway carbohydrate degradation; glycolysis; pyruvate from D-glyceraldehyde 3-phosphate: step 1/5. In Haloarcula vallismortis (Halobacterium vallismortis), this protein is Glyceraldehyde-3-phosphate dehydrogenase (gap).